Consider the following 618-residue polypeptide: Mitochondrial Rho GTPase 1 (618 aa).

Residues 1–592 lie on the Cytoplasmic side of the membrane; sequence MKKDVRILLV…TQADLKSSTF (592 aa). One can recognise a Miro 1 domain in the interval 2–168; it reads KKDVRILLVG…FYYAQKAVLH (167 aa). GTP contacts are provided by R14, G16, K17, T18, and S19. T18 serves as a coordination point for Mg(2+). The Mg(2+) site is built by P35 and D57. S59 contributes to the GTP binding site. N6-acetyllysine is present on K92. Residues N118, K119, D121, A149, and K150 each contribute to the GTP site. K153 participates in a covalent cross-link: Glycyl lysine isopeptide (Lys-Gly) (interchain with G-Cter in ubiquitin). Residues 184-219 enclose the EF-hand 1 domain; that stretch reads ACIKALTRIFKISDQDNDGTLNDAELNFFQRICFNT. Ca(2+) is bound by residues D197, D199, D201, T203, and E208. K235 is covalently cross-linked (Glycyl lysine isopeptide (Lys-Gly) (interchain with G-Cter in ubiquitin)). An EF-hand 2 domain is found at 304–339; it reads HAYLFLQSTFDKHDLDRDCALSPDELKDLFKVFPYI. 5 residues coordinate Ca(2+): D317, D319, D321, A323, and E328. The region spanning 416–579 is the Miro 2 domain; that stretch reads RNVFRCNVIG…FVKLTTMAMY (164 aa). 7 residues coordinate GTP: N428, C429, G430, K431, S432, G433, and K447. A Mg(2+)-binding site is contributed by N428. 15 residues coordinate GDP: N428, C429, G430, K431, S432, G433, K447, K454, S477, E478, K528, D530, T558, C559, and N560. Positions 528, 530, 558, and 559 each coordinate GTP. Residue K572 forms a Glycyl lysine isopeptide (Lys-Gly) (interchain with G-Cter in ubiquitin) linkage. Residues 593–615 traverse the membrane as a helical; Anchor for type IV membrane protein segment; that stretch reads WLRASFGATVFAVLGFAMYKALL. Over 616 to 618 the chain is Mitochondrial intermembrane; the sequence is KQR.

It belongs to the mitochondrial Rho GTPase family. In terms of assembly, homodimer. Interacts with the kinesin-binding proteins TRAK1/OIP106 and TRAK2/GRIF1, forming a link between mitochondria and the trafficking apparatus of the microtubules. Interacts with RAP1GDS1. Interacts with ARMCX1. Found in a complex with KIF5B, OGT, RHOT2 and TRAK1. In terms of processing, ubiquitinated by PRKN during mitophagy, leading to its degradation and enhancement of mitophagy. Deubiquitinated by USP30. Acetylation on Lys-92 decreases sensitivity of mitochondrial transport to elevated Ca(2+) levels, increases mitochondrial transport and promotes axon growth. Deacetylated by HDAC6 which blocks mitochondrial transport and mediates axon growth inhibition. In terms of tissue distribution, ubiquitously expressed. Expressed at high level in heart and skeletal muscle.

It localises to the mitochondrion outer membrane. It catalyses the reaction GTP + H2O = GDP + phosphate + H(+). The catalysed reaction is ATP + H2O = ADP + phosphate + H(+). The enzyme catalyses UTP + H2O = UDP + phosphate + H(+). In terms of biological role, atypical mitochondrial nucleoside-triphosphatase (NTPase) involved in mitochondrial trafficking. Probably involved in control of anterograde transport of mitochondria and their subcellular distribution. Promotes mitochondrial fission during high calcium conditions. Can hydrolyze GTP, ATP and UTP. This chain is Mitochondrial Rho GTPase 1 (RHOT1), found in Homo sapiens (Human).